The sequence spans 184 residues: UPF0301 protein RSKD131_2391 (184 aa).

Belongs to the UPF0301 (AlgH) family.

The chain is UPF0301 protein RSKD131_2391 from Cereibacter sphaeroides (strain KD131 / KCTC 12085) (Rhodobacter sphaeroides).